Reading from the N-terminus, the 218-residue chain is MRKRISAIIMTLFMVFMSCNNGGPELKSDEVAKSDGTVLDLAKISKKIKDAVEFAASVKEIETLVKSIDELAKAIGKKIKQNSEDLEVDNGKNNKNGELVAGAFQVMLTVKAKLEKLGNTPEISEELKGKITDSKSKCKEFVDKVKADSDISKAEATDEHVKKAIDQVNAPAGEKGVVELVKLNKSIGELLKAANAAAEAAIAELTAPVKAEKPSQNN.

The N-terminal stretch at 1 to 18 (MRKRISAIIMTLFMVFMS) is a signal peptide. Cys-19 carries the N-palmitoyl cysteine lipid modification. Cys-19 is lipidated: S-diacylglycerol cysteine.

It belongs to the variable small protein (Vsp) family.

The protein resides in the cell outer membrane. Its function is as follows. The Vlp and Vsp proteins are antigenically distinct proteins, only one vlp or vsp gene is transcriptionally active at any one time. Switching between these genes is a mechanism of host immune response evasion. This Borrelia hermsii protein is Variable small protein 8.